A 260-amino-acid chain; its full sequence is 3'-5' ssDNA/RNA exonuclease TatD (260 aa).

The a divalent metal cation site is built by Glu-91, His-127, and His-152.

The protein belongs to the metallo-dependent hydrolases superfamily. TatD-type hydrolase family. TatD subfamily. Monomer. The cofactor is Mg(2+).

It localises to the cytoplasm. In terms of biological role, 3'-5' exonuclease that prefers single-stranded DNA and RNA. May play a role in the H(2)O(2)-induced DNA damage repair. This chain is 3'-5' ssDNA/RNA exonuclease TatD, found in Citrobacter koseri (strain ATCC BAA-895 / CDC 4225-83 / SGSC4696).